The following is a 228-amino-acid chain: E3 ubiquitin-protein ligase RNF114 (228 aa).

The segment at 29–68 adopts an RING-type zinc-finger fold; that stretch reads CPVCLEVYEKPVQVPCGHVFCSACLQECLKPKKPVCGVCR. C91 and C94 together coordinate Zn(2+). The segment at 91–110 adopts a C2HC RNF-type zinc-finger fold; sequence CHGCRKNFFLSKIRSHVATC. K102 carries the post-translational modification N6-acetyllysine. Zn(2+) contacts are provided by H106 and C110. K112 is subject to N6-acetyllysine.

In terms of assembly, interacts with XAF1, the interaction increases XAF1 stability and proapoptotic effects, and may regulate IFN signaling. In terms of processing, autoubiquitinated. Polyubiquitinated in the presence of E2 enzymes UBE2D1, UBE2D2 and UBE2D3, but only monoubiquitinated in the presence of UBE2E1. In terms of tissue distribution, expressed in numerous tissues, including skin, CD4 lymphocytes and dendritic cells. Highest levels in testis.

The protein resides in the cytoplasm. The protein localises to the nucleus. It carries out the reaction S-ubiquitinyl-[E2 ubiquitin-conjugating enzyme]-L-cysteine + [acceptor protein]-L-lysine = [E2 ubiquitin-conjugating enzyme]-L-cysteine + N(6)-ubiquitinyl-[acceptor protein]-L-lysine.. It participates in protein modification; protein ubiquitination. E3 ubiquitin-protein ligase that promotes the ubiquitination of various substrates. In turn, participates in the regulation of many biological processes including cell cycle, apoptosis, osteoclastogenesis as well as innate or adaptive immunity. Acts as a negative regulator of NF-kappa-B-dependent transcription by promoting the ubiquitination and stabilization of the NF-kappa-B inhibitor TNFAIP3. May promote the ubiquitination of TRAF6 as well. Also acts as a negative regulator of T-cell activation. Inhibits cellular dsRNA responses and interferon production by targeting MAVS component for proteasomal degradation. Ubiquitinates the CDK inhibitor CDKN1A leading to its degradationand probably also CDKN1B and CDKN1C. This activity stimulates cell cycle G1-to-S phase transition and suppresses cellular senescence. May play a role in spermatogenesis. The polypeptide is E3 ubiquitin-protein ligase RNF114 (RNF114) (Homo sapiens (Human)).